The sequence spans 544 residues: Dynein axonemal assembly factor 3 (544 aa).

Disordered stretches follow at residues 328-350 and 448-544; these read RAAEGDPEQVQGGAEGSSEPAAP and TFAR…YPIP. The segment covering 522–536 has biased composition (polar residues); sequence PTGSQAPKSENQTVP.

This sequence belongs to the DNAAF3 family.

Its subcellular location is the cytoplasm. It is found in the dynein axonemal particle. In terms of biological role, required for the assembly of axonemal inner and outer dynein arms. Involved in preassembly of dyneins into complexes before their transport into cilia. In Bos taurus (Bovine), this protein is Dynein axonemal assembly factor 3 (DNAAF3).